The primary structure comprises 128 residues: MPYLSGLGNDLVRIQRFRRFLEAGKTAILERLFTEEERSFCLAKKDPAPHFAVRFAAKEAFLKALGTGLRYGIRWQDMAVVRNPEGKPDLVLDGEAARLFEDRGHVRLLLSCSHDGDYAFATVVFEGN.

The Mg(2+) site is built by D10 and E59.

The protein belongs to the P-Pant transferase superfamily. AcpS family. Mg(2+) serves as cofactor.

Its subcellular location is the cytoplasm. It catalyses the reaction apo-[ACP] + CoA = holo-[ACP] + adenosine 3',5'-bisphosphate + H(+). Functionally, transfers the 4'-phosphopantetheine moiety from coenzyme A to a Ser of acyl-carrier-protein. The polypeptide is Holo-[acyl-carrier-protein] synthase (Syntrophotalea carbinolica (strain DSM 2380 / NBRC 103641 / GraBd1) (Pelobacter carbinolicus)).